Reading from the N-terminus, the 126-residue chain is Glycine cleavage system H protein (126 aa).

Positions 23 to 104 (TLTVGITDHA…PYESWLFKIK (82 aa)) constitute a Lipoyl-binding domain. At K64 the chain carries N6-lipoyllysine.

This sequence belongs to the GcvH family. As to quaternary structure, the glycine cleavage system is composed of four proteins: P, T, L and H. The cofactor is (R)-lipoate.

Its function is as follows. The glycine cleavage system catalyzes the degradation of glycine. The H protein shuttles the methylamine group of glycine from the P protein to the T protein. The chain is Glycine cleavage system H protein from Paraburkholderia xenovorans (strain LB400).